Reading from the N-terminus, the 152-residue chain is SsrA-binding protein (152 aa).

It belongs to the SmpB family.

Its subcellular location is the cytoplasm. Its function is as follows. Required for rescue of stalled ribosomes mediated by trans-translation. Binds to transfer-messenger RNA (tmRNA), required for stable association of tmRNA with ribosomes. tmRNA and SmpB together mimic tRNA shape, replacing the anticodon stem-loop with SmpB. tmRNA is encoded by the ssrA gene; the 2 termini fold to resemble tRNA(Ala) and it encodes a 'tag peptide', a short internal open reading frame. During trans-translation Ala-aminoacylated tmRNA acts like a tRNA, entering the A-site of stalled ribosomes, displacing the stalled mRNA. The ribosome then switches to translate the ORF on the tmRNA; the nascent peptide is terminated with the 'tag peptide' encoded by the tmRNA and targeted for degradation. The ribosome is freed to recommence translation, which seems to be the essential function of trans-translation. The protein is SsrA-binding protein of Persephonella marina (strain DSM 14350 / EX-H1).